The primary structure comprises 130 residues: S-adenosylmethionine decarboxylase proenzyme (130 aa).

Ser-66 functions as the Schiff-base intermediate with substrate; via pyruvic acid in the catalytic mechanism. At Ser-66 the chain carries Pyruvic acid (Ser); by autocatalysis. Residue His-71 is the Proton acceptor; for processing activity of the active site. Cys-86 serves as the catalytic Proton donor; for catalytic activity.

Belongs to the prokaryotic AdoMetDC family. Type 1 subfamily. Heterotetramer of two alpha and two beta chains arranged as a dimer of alpha/beta heterodimers. Pyruvate is required as a cofactor. Post-translationally, is synthesized initially as an inactive proenzyme. Formation of the active enzyme involves a self-maturation process in which the active site pyruvoyl group is generated from an internal serine residue via an autocatalytic post-translational modification. Two non-identical subunits are generated from the proenzyme in this reaction, and the pyruvate is formed at the N-terminus of the alpha chain, which is derived from the carboxyl end of the proenzyme. The post-translation cleavage follows an unusual pathway, termed non-hydrolytic serinolysis, in which the side chain hydroxyl group of the serine supplies its oxygen atom to form the C-terminus of the beta chain, while the remainder of the serine residue undergoes an oxidative deamination to produce ammonia and the pyruvoyl group blocking the N-terminus of the alpha chain.

The catalysed reaction is S-adenosyl-L-methionine + H(+) = S-adenosyl 3-(methylsulfanyl)propylamine + CO2. It functions in the pathway amine and polyamine biosynthesis; S-adenosylmethioninamine biosynthesis; S-adenosylmethioninamine from S-adenosyl-L-methionine: step 1/1. Catalyzes the decarboxylation of S-adenosylmethionine to S-adenosylmethioninamine (dcAdoMet), the propylamine donor required for the synthesis of the polyamines spermine and spermidine from the diamine putrescine. The protein is S-adenosylmethionine decarboxylase proenzyme of Bacillus cereus (strain ATCC 10987 / NRS 248).